The primary structure comprises 238 residues: 2-phytyl-1,4-naphtoquinone methyltransferase (238 aa).

The protein belongs to the class I-like SAM-binding methyltransferase superfamily. MenG/UbiE family.

The enzyme catalyses demethylphylloquinol + S-adenosyl-L-methionine = phylloquinol + S-adenosyl-L-homocysteine + H(+). It participates in cofactor biosynthesis; phylloquinone biosynthesis. Methyltransferase required for the conversion of 2-phytyl-1,4-beta-naphthoquinol to phylloquinol. The sequence is that of 2-phytyl-1,4-naphtoquinone methyltransferase from Synechocystis sp. (strain ATCC 27184 / PCC 6803 / Kazusa).